Reading from the N-terminus, the 291-residue chain is 2-dehydro-3-deoxyphosphooctonate aldolase 2 (291 aa).

At A2 the chain carries N-acetylalanine.

This sequence belongs to the KdsA family. As to expression, expressed in roots, apical meristem, emerging leaves, hydathodes of young leaves, styles of mature flowers and funicules of mature siliques.

It localises to the cytoplasm. It catalyses the reaction D-arabinose 5-phosphate + phosphoenolpyruvate + H2O = 3-deoxy-alpha-D-manno-2-octulosonate-8-phosphate + phosphate. In terms of biological role, catalyzes the stereospecific condensation of D-arabinose 5-phosphate and phosphoenolpyruvate to form 3-deoxy-D-manno-octulosonate 8-phosphate (KDO-8-phosphate) and inorganic phosphate. Involved in the biosynthesis of 3-deoxy-D-manno-octulosonate (KDO) which is an indispensable component of rhamnogalacturonan II (RG-II), a structurally complex pectic polysaccharide of the primary cell wall. RG-II is essential for the cell wall integrity of rapidly growing tissues and pollen tube growth and elongation. This Arabidopsis thaliana (Mouse-ear cress) protein is 2-dehydro-3-deoxyphosphooctonate aldolase 2 (KDSA2).